A 1661-amino-acid polypeptide reads, in one-letter code: Cortactin-binding protein 2 (1661 aa).

Disordered regions lie at residues M1–T27, E206–E226, T329–P438, N454–S477, and Q493–K612. Residues K124–K280 are a coiled coil. The segment covering G383–S394 has biased composition (low complexity). Positions S412–S426 are enriched in polar residues. The segment covering N454–Q466 has biased composition (low complexity). Polar residues predominate over residues S467 to S477. R497 is modified (asymmetric dimethylarginine). ANK repeat units lie at residues G707–Y737, D741–A770, N774–H803, G807–V836, and D840–G869. Residues E876–K896 are disordered. The stretch at E910–R940 is one ANK 6 repeat. Residues G1444–E1480 are disordered. Residue S1522 is modified to Phosphoserine. 2 disordered regions span residues R1555 to K1597 and P1614 to K1661. The segment covering K1580 to K1597 has biased composition (polar residues). The span at S1622 to Q1636 shows a compositional bias: low complexity. Residues S1643–K1661 are compositionally biased toward basic and acidic residues.

As to quaternary structure, interacts with CTTN/cortactin SH3 domain. Interacts with STRN, STRN4/zinedin and MOB4/phocein; this interactions mediate the association with the STRIPAK core complex and may regulate dendritic spine distribution of the STRIPAK complex in hippocampal neurons. Activation of glutamate receptors weakens the interaction with STRN and STRN4.

Its subcellular location is the cytoplasm. The protein resides in the cell cortex. It localises to the cell projection. It is found in the dendritic spine. Regulates the dendritic spine distribution of CTTN/cortactin in hippocampal neurons, and thus controls dendritic spinogenesis and dendritic spine maintenance. Associates with the striatin-interacting phosphatase and kinase (STRIPAK) core complex to regulate dendritic spine distribution of the STRIPAK complex in hippocampal neurons. This chain is Cortactin-binding protein 2 (CTTNBP2), found in Loxodonta africana (African elephant).